The following is a 445-amino-acid chain: Phosphoglucosamine mutase 1 (445 aa).

Catalysis depends on S102, which acts as the Phosphoserine intermediate. Residues S102, D241, D243, and D245 each contribute to the Mg(2+) site. S102 is subject to Phosphoserine.

It belongs to the phosphohexose mutase family. It depends on Mg(2+) as a cofactor. Post-translationally, activated by phosphorylation.

The enzyme catalyses alpha-D-glucosamine 1-phosphate = D-glucosamine 6-phosphate. Functionally, catalyzes the conversion of glucosamine-6-phosphate to glucosamine-1-phosphate. This chain is Phosphoglucosamine mutase 1, found in Shewanella sp. (strain MR-7).